Consider the following 347-residue polypeptide: Purine-rich element-binding protein gamma (347 aa).

Disordered regions lie at residues 1-34 (MERARRRGGGGGRGRGGKNVGGSGLSKSRLYPQA) and 133-169 (GHRQEHGHSKEQGSRRRQKHSAPSPPVSVGSEEHPHS). The segment covering 9 to 24 (GGGGRGRGGKNVGGSG) has biased composition (gly residues). A DNA-binding region spans residues 51 to 293 (AGGAAEIQEL…GIFLKVSEVR (243 aa)). The segment covering 134–146 (HRQEHGHSKEQGS) has biased composition (basic and acidic residues). Ser160, Ser163, and Ser339 each carry phosphoserine.

This sequence belongs to the PUR DNA-binding protein family. In terms of tissue distribution, isoform 1 is expressed in testis and glioblastoma. Isoform 2 is expressed in fetal lung.

It localises to the nucleus. The polypeptide is Purine-rich element-binding protein gamma (PURG) (Homo sapiens (Human)).